Consider the following 264-residue polypeptide: Probable membrane transporter protein HI_0902 (264 aa).

9 helical membrane-spanning segments follow: residues 4–24 (FILL…LFGI), 28–48 (LVIV…ESLL), 49–69 (MSTA…GSAQ), 81–101 (AVRI…LFIG), 107–127 (ISAK…VLSI), 147–167 (ILIG…IVPF), 183–203 (AFCG…SGWG), 210–230 (YSLG…SFFT), and 243–263 (VSTL…NMFL).

Belongs to the 4-toluene sulfonate uptake permease (TSUP) (TC 2.A.102) family.

It is found in the cell membrane. This is Probable membrane transporter protein HI_0902 from Haemophilus influenzae (strain ATCC 51907 / DSM 11121 / KW20 / Rd).